Reading from the N-terminus, the 509-residue chain is tRNA-2-methylthio-N(6)-dimethylallyladenosine synthase (509 aa).

Residues 1 to 15 show a composition bias toward polar residues; the sequence is MNEQQRLASRQANSS. The disordered stretch occupies residues 1 to 25; sequence MNEQQRLASRQANSSTKKEEKDYSK. Residues 16 to 25 are compositionally biased toward basic and acidic residues; sequence TKKEEKDYSK. The 119-residue stretch at 66 to 184 folds into the MTTase N-terminal domain; sequence RKFYIRTYGC…LPYILKDAMF (119 aa). Positions 75, 111, 145, 221, 225, and 228 each coordinate [4Fe-4S] cluster. The Radical SAM core domain maps to 207 to 437; the sequence is RRGDIKAWVN…NTLVNEYGVN (231 aa). Residues 440–503 enclose the TRAM domain; sequence KRYIGQIVEV…TWSLNGELVK (64 aa).

The protein belongs to the methylthiotransferase family. MiaB subfamily. Monomer. The cofactor is [4Fe-4S] cluster.

Its subcellular location is the cytoplasm. It catalyses the reaction N(6)-dimethylallyladenosine(37) in tRNA + (sulfur carrier)-SH + AH2 + 2 S-adenosyl-L-methionine = 2-methylsulfanyl-N(6)-dimethylallyladenosine(37) in tRNA + (sulfur carrier)-H + 5'-deoxyadenosine + L-methionine + A + S-adenosyl-L-homocysteine + 2 H(+). Catalyzes the methylthiolation of N6-(dimethylallyl)adenosine (i(6)A), leading to the formation of 2-methylthio-N6-(dimethylallyl)adenosine (ms(2)i(6)A) at position 37 in tRNAs that read codons beginning with uridine. In Bacillus mycoides (strain KBAB4) (Bacillus weihenstephanensis), this protein is tRNA-2-methylthio-N(6)-dimethylallyladenosine synthase.